The chain runs to 189 residues: Mitochondrial FAD-linked sulfhydryl oxidase ERV1 (189 aa).

One can recognise an ERV/ALR sulfhydryl oxidase domain in the interval 83 to 183 (DPPDVEQLGR…FDCNFWEKRW (101 aa)). Residues 88 to 95 (EQLGRSSW), His99, and Tyr128 each bind FAD. 2 disulfide bridges follow: Cys130/Cys133 and Cys159/Cys176. FAD is bound by residues 159 to 171 (CEAH…KLRK) and 182 to 183 (RW).

In terms of assembly, homodimer. Interacts with MIA40, forming transient intermolecular disulfide bridges. FAD serves as cofactor.

The protein localises to the mitochondrion intermembrane space. The enzyme catalyses 2 R'C(R)SH + O2 = R'C(R)S-S(R)CR' + H2O2. In terms of biological role, FAD-dependent sulfhydryl oxidase that catalyzes disulfide bond formation. Required for the import and folding of small cysteine-containing proteins in the mitochondrial intermembrane space (IMS). Forms a redox cycle with MIA40 that involves a disulfide relay system. Important for maintaining the cysteine residues in MIA40 in an oxidized state. Reduced ERV1 is reoxidized by cytochrome c. Required for the maturation of cytoplasmic, but not of mitochondrial Fe/S proteins. The sequence is that of Mitochondrial FAD-linked sulfhydryl oxidase ERV1 (ERV1) from Saccharomyces cerevisiae (strain ATCC 204508 / S288c) (Baker's yeast).